The sequence spans 309 residues: tRNA dimethylallyltransferase (309 aa).

Gly14–Ser21 contributes to the ATP binding site. Substrate is bound at residue Thr16–Ser21. An interaction with substrate tRNA region spans residues Asp39–Gln42.

It belongs to the IPP transferase family. In terms of assembly, monomer. The cofactor is Mg(2+).

The enzyme catalyses adenosine(37) in tRNA + dimethylallyl diphosphate = N(6)-dimethylallyladenosine(37) in tRNA + diphosphate. Catalyzes the transfer of a dimethylallyl group onto the adenine at position 37 in tRNAs that read codons beginning with uridine, leading to the formation of N6-(dimethylallyl)adenosine (i(6)A). The polypeptide is tRNA dimethylallyltransferase (Geobacter metallireducens (strain ATCC 53774 / DSM 7210 / GS-15)).